The sequence spans 364 residues: Aminomethyltransferase (364 aa).

The protein belongs to the GcvT family. The glycine cleavage system is composed of four proteins: P, T, L and H.

It catalyses the reaction N(6)-[(R)-S(8)-aminomethyldihydrolipoyl]-L-lysyl-[protein] + (6S)-5,6,7,8-tetrahydrofolate = N(6)-[(R)-dihydrolipoyl]-L-lysyl-[protein] + (6R)-5,10-methylene-5,6,7,8-tetrahydrofolate + NH4(+). In terms of biological role, the glycine cleavage system catalyzes the degradation of glycine. This Escherichia coli (strain SMS-3-5 / SECEC) protein is Aminomethyltransferase.